A 114-amino-acid chain; its full sequence is uncharacterized protein (114 aa).

The tract at residues 1-24 is disordered; sequence MFGACYKQPLKPSGSEPPAEECRM.

As to expression, expressed in kidney and liver.

This is an uncharacterized protein from Homo sapiens (Human).